Reading from the N-terminus, the 621-residue chain is F-box/LRR-repeat protein 4 (621 aa).

The residue at position 28 (Arg-28) is an Asymmetric dimethylarginine. The F-box domain maps to 277-332 (NGYFDKLPYELIQLILNHLTLPDLCRLAQTCKLLNQHCCDPLQYIHLNLQPYWAKL). LRR repeat units lie at residues 376–397 (ELVR…EIIS), 402–421 (NLQD…AFSH), 427–448 (GLKR…SILN), 452–474 (DLQH…ASMI), 480–501 (KLRT…AELA), 504–524 (CPLL…STGC), 532–558 (LPNL…ASNC), 559–583 (TRLR…LLES), and 584–609 (CKDL…LSAS).

As to quaternary structure, part of a SCF (SKP1-CUL1-F-box) protein ligase complex. Interacts with FAF2 and VCP. Interacts with PPTC7; this interaction promotes destruction of BNIP3 and NIX and mitophagy suppression.

The protein localises to the cytoplasm. Its subcellular location is the nucleus. It localises to the mitochondrion outer membrane. Its function is as follows. Substrate-recognition component of the mitochondria-localized SCF-FBXL4 ubiquitin E3 ligase complex that plays a role in the restriction of mitophagy by controlling the degradation of BNIP3 and NIX mitophagy receptors. Also rescues mitochondrial injury through reverting hyperactivation of DRP1-mediated mitochondrial fission. This is F-box/LRR-repeat protein 4 (FBXL4) from Bos taurus (Bovine).